The sequence spans 204 residues: Putative AgrB-like protein (204 aa).

Helical transmembrane passes span 51–73 (VYGI…SYLW), 87–107 (LNCT…FQNI), 111–131 (NWIV…FAPA), 151–168 (AMIG…IPFA), and 173–190 (LIMV…PLTY).

It belongs to the AgrB family.

It localises to the cell membrane. In terms of biological role, may be involved in the proteolytic processing of a quorum sensing system signal molecule precursor. This Listeria innocua serovar 6a (strain ATCC BAA-680 / CLIP 11262) protein is Putative AgrB-like protein.